The primary structure comprises 408 residues: Imidazolonepropionase (408 aa).

Residues H73 and H75 each coordinate Fe(3+). Zn(2+) is bound by residues H73 and H75. Positions 82, 145, and 178 each coordinate 4-imidazolone-5-propanoate. Y145 contacts N-formimidoyl-L-glutamate. Fe(3+) is bound at residue H243. H243 is a Zn(2+) binding site. Residue Q246 coordinates 4-imidazolone-5-propanoate. D318 is a binding site for Fe(3+). D318 provides a ligand contact to Zn(2+). N-formimidoyl-L-glutamate is bound by residues N320 and G322. Residue S323 participates in 4-imidazolone-5-propanoate binding.

It belongs to the metallo-dependent hydrolases superfamily. HutI family. Requires Zn(2+) as cofactor. Fe(3+) is required as a cofactor.

It is found in the cytoplasm. It carries out the reaction 4-imidazolone-5-propanoate + H2O = N-formimidoyl-L-glutamate. Its pathway is amino-acid degradation; L-histidine degradation into L-glutamate; N-formimidoyl-L-glutamate from L-histidine: step 3/3. Catalyzes the hydrolytic cleavage of the carbon-nitrogen bond in imidazolone-5-propanoate to yield N-formimidoyl-L-glutamate. It is the third step in the universal histidine degradation pathway. The polypeptide is Imidazolonepropionase (Shewanella oneidensis (strain ATCC 700550 / JCM 31522 / CIP 106686 / LMG 19005 / NCIMB 14063 / MR-1)).